Here is a 106-residue protein sequence, read N- to C-terminus: Thioredoxin (106 aa).

Lys-3 bears the N6-acetyllysine mark. Positions 3 to 106 (KQIESKTAFQ…KLEATINELV (104 aa)) constitute a Thioredoxin domain. Lys-8 carries the N6-succinyllysine modification. Residues Cys-32 and Cys-35 each act as nucleophile in the active site. A disulfide bond links Cys-32 and Cys-35. An N6-acetyllysine modification is found at Lys-39. 2 positions are modified to S-nitrosocysteine: Cys-62 and Cys-69. Cys-73 carries the post-translational modification S-nitrosocysteine; alternate. Residue Lys-95 is modified to N6-acetyllysine; alternate. An N6-succinyllysine; alternate modification is found at Lys-95.

The protein belongs to the thioredoxin family. As to quaternary structure, homodimer; disulfide-linked. Interacts with TXNIP through the redox-active site. Interacts with MAP3K5 and CASP3. Interacts with APEX1; the interaction stimulates the FOS/JUN AP-1 DNA-binding activity in a redox-dependent manner. Post-translationally, in the fully reduced protein, both Cys-69 and Cys-73 are nitrosylated in response to nitric oxide (NO). When two disulfide bonds are present in the protein, only Cys-73 is nitrosylated. Cys-73 can serve as donor for nitrosylation of target proteins.

Its subcellular location is the nucleus. The protein localises to the cytoplasm. The protein resides in the secreted. Functionally, participates in various redox reactions through the reversible oxidation of its active center dithiol to a disulfide and catalyzes dithiol-disulfide exchange reactions. Plays a role in the reversible S-nitrosylation of cysteine residues in target proteins, and thereby contributes to the response to intracellular nitric oxide. Nitrosylates the active site Cys of CASP3 in response to nitric oxide (NO), and thereby inhibits caspase-3 activity. Induces the FOS/JUN AP-1 DNA binding activity in ionizing radiation (IR) cells through its oxidation/reduction status and stimulates AP-1 transcriptional activity. The sequence is that of Thioredoxin (TXN) from Pongo abelii (Sumatran orangutan).